A 348-amino-acid polypeptide reads, in one-letter code: Dihydroorotase (348 aa).

Zn(2+)-binding residues include His17 and His19. Residues 19-21 (HLR) and Asn45 each bind substrate. Zn(2+)-binding residues include Lys103, His140, and His178. Lys103 carries the N6-carboxylysine modification. His140 contacts substrate. Residue Leu223 coordinates substrate. Zn(2+) is bound at residue Asp251. The active site involves Asp251. Residues His255 and Ala267 each coordinate substrate.

It belongs to the metallo-dependent hydrolases superfamily. DHOase family. Class II DHOase subfamily. As to quaternary structure, homodimer. The cofactor is Zn(2+).

It carries out the reaction (S)-dihydroorotate + H2O = N-carbamoyl-L-aspartate + H(+). The protein operates within pyrimidine metabolism; UMP biosynthesis via de novo pathway; (S)-dihydroorotate from bicarbonate: step 3/3. In terms of biological role, catalyzes the reversible cyclization of carbamoyl aspartate to dihydroorotate. The chain is Dihydroorotase from Escherichia fergusonii (strain ATCC 35469 / DSM 13698 / CCUG 18766 / IAM 14443 / JCM 21226 / LMG 7866 / NBRC 102419 / NCTC 12128 / CDC 0568-73).